A 441-amino-acid polypeptide reads, in one-letter code: Platelet-activating factor acetylhydrolase (441 aa).

The N-terminal stretch at methionine 1 to proline 21 is a signal peptide. Catalysis depends on serine 273, which acts as the Nucleophile. Active-site charge relay system residues include aspartate 296 and histidine 351. N-linked (GlcNAc...) asparagine glycans are attached at residues asparagine 423 and asparagine 433.

It belongs to the AB hydrolase superfamily. Lipase family. Post-translationally, N-glycosylated. Macrophage-derived PLA2G7 carries sialylated complex-type N-glycans that hinder its binding to HDL particles. In terms of tissue distribution, plasma. Secreted by macrophages (at protein level).

The protein localises to the secreted. Its subcellular location is the extracellular space. It catalyses the reaction a 1-O-alkyl-2-acetyl-sn-glycero-3-phosphocholine + H2O = a 1-O-alkyl-sn-glycero-3-phosphocholine + acetate + H(+). The catalysed reaction is 1-O-decyl-2-acetyl-sn-glycero-3-phosphocholine + H2O = 1-O-decyl-sn-glycero-3-phosphocholine + acetate + H(+). The enzyme catalyses 1-O-dodecyl-2-acetyl-sn-glycero-3-phosphocholine + H2O = 1-O-dodecyl-sn-glycero-3-phosphocholine + acetate + H(+). It carries out the reaction 1-O-tetradecyl-2-acetyl-sn-glycero-3-phosphocholine + H2O = 1-O-tetradecyl-sn-glycero-3-phosphocholine + acetate + H(+). It catalyses the reaction 1-O-hexadecyl-2-acetyl-sn-glycero-3-phosphocholine + H2O = 1-O-hexadecyl-sn-glycero-3-phosphocholine + acetate + H(+). The catalysed reaction is 1-O-octadecyl-2-acetyl-sn-glycero-3-phosphocholine + H2O = 1-O-octadecyl-sn-glycero-3-phosphocholine + acetate + H(+). The enzyme catalyses 1-hexadecanoyl-2-acetyl-sn-glycero-3-phosphocholine + H2O = 1-hexadecanoyl-sn-glycero-3-phosphocholine + acetate + H(+). It carries out the reaction 1-hexadecanoyl-2-propionyl-sn-glycero-3-phosphocholine + H2O = propanoate + 1-hexadecanoyl-sn-glycero-3-phosphocholine + H(+). It catalyses the reaction 1-hexadecanoyl-2-butanoyl-sn-glycero-3-phosphocholine + H2O = butanoate + 1-hexadecanoyl-sn-glycero-3-phosphocholine + H(+). The catalysed reaction is 1-hexadecanoyl-2-pentanoyl-sn-glycero-3-phosphocholine + H2O = pentanoate + 1-hexadecanoyl-sn-glycero-3-phosphocholine + H(+). The enzyme catalyses 1-hexadecanoyl-2-glutaroyl-sn-glycero-3-phosphocholine + H2O = glutarate + 1-hexadecanoyl-sn-glycero-3-phosphocholine + H(+). It carries out the reaction 1-hexadecanoyl-2-(5-oxopentanoyl)-sn-glycero-3-phosphocholine + H2O = 5-oxopentanoate + 1-hexadecanoyl-sn-glycero-3-phosphocholine + H(+). It catalyses the reaction 1-hexadecanoyl-2-(9-oxononanoyl)-sn-glycero-3-phosphocholine + H2O = 9-oxononanoate + 1-hexadecanoyl-sn-glycero-3-phosphocholine + H(+). The catalysed reaction is 1-hexadecanoyl-2-[9-hydroperoxy-(10E-octadecenoyl)]-sn-glycero-3-phosphocholine + H2O = 9-hydroperoxy-10E-octadecenoate + 1-hexadecanoyl-sn-glycero-3-phosphocholine + H(+). The enzyme catalyses 1-hexadecanoyl-2-(10-hydroperoxy-8E-octadecenoyl)-sn-glycero-3-phosphocholine + H2O = 10-hydroperoxy-(8E)-octadecenoate + 1-hexadecanoyl-sn-glycero-3-phosphocholine + H(+). Lipoprotein-associated calcium-independent phospholipase A2 involved in phospholipid catabolism during inflammatory and oxidative stress response. At the lipid-aqueous interface, hydrolyzes the ester bond of fatty acyl group attached at sn-2 position of phospholipids (phospholipase A2 activity). Specifically targets phospholipids with a short-chain fatty acyl group at sn-2 position. Can hydrolyze phospholipids with long fatty acyl chains, only if they carry oxidized functional groups. Hydrolyzes and inactivates platelet-activating factor (PAF, 1-O-alkyl-2-acetyl-sn-glycero-3-phosphocholine), a potent pro-inflammatory signaling lipid that acts through PTAFR on various innate immune cells. Hydrolyzes oxidatively truncated phospholipids carrying an aldehyde group at omega position, preventing their accumulation in low-density lipoprotein (LDL) particles and uncontrolled pro-inflammatory effects. As part of high-density lipoprotein (HDL) particles, can hydrolyze phospholipids having long-chain fatty acyl hydroperoxides at sn-2 position and protect against potential accumulation of these oxylipins in the vascular wall. Catalyzes the release from membrane phospholipids of F2-isoprostanes, lipid biomarkers of cellular oxidative damage. The chain is Platelet-activating factor acetylhydrolase (PLA2G7) from Homo sapiens (Human).